Reading from the N-terminus, the 421-residue chain is Ribulose bisphosphate carboxylase large chain (421 aa).

N68 and T118 together coordinate substrate. The active-site Proton acceptor is K120. K122 contacts substrate. Mg(2+)-binding residues include K146, D148, and E149. At K146 the chain carries N6-carboxylysine. The active-site Proton acceptor is the H239. R240, H272, and S324 together coordinate substrate.

Belongs to the RuBisCO large chain family. Type I subfamily. In terms of assembly, heterohexadecamer of 8 large chains and 8 small chains; disulfide-linked. The disulfide link is formed within the large subunit homodimers. It depends on Mg(2+) as a cofactor. The disulfide bond which can form in the large chain dimeric partners within the hexadecamer appears to be associated with oxidative stress and protein turnover.

It localises to the plastid. It is found in the chloroplast. The catalysed reaction is 2 (2R)-3-phosphoglycerate + 2 H(+) = D-ribulose 1,5-bisphosphate + CO2 + H2O. It carries out the reaction D-ribulose 1,5-bisphosphate + O2 = 2-phosphoglycolate + (2R)-3-phosphoglycerate + 2 H(+). RuBisCO catalyzes two reactions: the carboxylation of D-ribulose 1,5-bisphosphate, the primary event in carbon dioxide fixation, as well as the oxidative fragmentation of the pentose substrate in the photorespiration process. Both reactions occur simultaneously and in competition at the same active site. This is Ribulose bisphosphate carboxylase large chain (rbcL) from Aegilops crassa (Persian goatgrass).